Consider the following 226-residue polypeptide: Putative N-acetylmannosamine-6-phosphate 2-epimerase (226 aa).

The protein belongs to the NanE family.

The catalysed reaction is an N-acyl-D-glucosamine 6-phosphate = an N-acyl-D-mannosamine 6-phosphate. The protein operates within amino-sugar metabolism; N-acetylneuraminate degradation; D-fructose 6-phosphate from N-acetylneuraminate: step 3/5. Its function is as follows. Converts N-acetylmannosamine-6-phosphate (ManNAc-6-P) to N-acetylglucosamine-6-phosphate (GlcNAc-6-P). This is Putative N-acetylmannosamine-6-phosphate 2-epimerase from Mycoplasma capricolum subsp. capricolum (strain California kid / ATCC 27343 / NCTC 10154).